Consider the following 247-residue polypeptide: ATP synthase subunit a, chloroplastic (247 aa).

5 consecutive transmembrane segments (helical) span residues 38-58, 95-115, 134-154, 199-219, and 220-240; these read QVLI…VIAV, VPFI…GALL, INTT…AGLS, LVVV…VMFL, and GLFT…AYIG.

The protein belongs to the ATPase A chain family. In terms of assembly, F-type ATPases have 2 components, CF(1) - the catalytic core - and CF(0) - the membrane proton channel. CF(1) has five subunits: alpha(3), beta(3), gamma(1), delta(1), epsilon(1). CF(0) has four main subunits: a, b, b' and c.

The protein resides in the plastid. The protein localises to the chloroplast thylakoid membrane. Its function is as follows. Key component of the proton channel; it plays a direct role in the translocation of protons across the membrane. The sequence is that of ATP synthase subunit a, chloroplastic from Hordeum vulgare (Barley).